The following is a 130-amino-acid chain: Fluoride-specific ion channel FluC (130 aa).

4 helical membrane passes run 7–27 (VLAI…LGLW), 36–56 (LGTL…VAVF), 69–89 (ALIT…AEVV), and 99–119 (LGFG…LAGI). Na(+) is bound by residues G76 and T79.

The protein belongs to the fluoride channel Fluc/FEX (TC 1.A.43) family.

The protein localises to the cell inner membrane. It carries out the reaction fluoride(in) = fluoride(out). Na(+) is not transported, but it plays an essential structural role and its presence is essential for fluoride channel function. In terms of biological role, fluoride-specific ion channel. Important for reducing fluoride concentration in the cell, thus reducing its toxicity. The protein is Fluoride-specific ion channel FluC of Albidiferax ferrireducens (strain ATCC BAA-621 / DSM 15236 / T118) (Rhodoferax ferrireducens).